Reading from the N-terminus, the 409-residue chain is FAD-dependent monooxygenase phnB (409 aa).

Residues E35, A50, R110, and D311 each contribute to the FAD site.

Belongs to the paxM FAD-dependent monooxygenase family. FAD is required as a cofactor.

The catalysed reaction is 3,6,7,9-tetrahydroxy-3-methyl-2,3-dihydro-1H-naphtho[2,1-b]pyran-1-one + NADPH + O2 + H(+) = 2,3,4,7,9-pentahydroxy-6-methyl-1H-phenalen-1-one + NADP(+) + 2 H2O. It participates in secondary metabolite biosynthesis. Its function is as follows. FAD-dependent monooxygenase; part of the gene cluster that mediates the biosynthesis of phenalenones such as herqueinone, compounds that have been reported to treat tumors, bacterial infections and/or mycoses, and rheumatic diseases. The non-reducing polyketide synthase phnA synthesizes the heptaketide backbone and cyclizes it into the angular, hemiketal-containing naphtho-gamma-pyrone prephenalenone. The product template (PT) domain of phnA catalyzes only the C4-C9 aldol condensation, which is unprecedented among known PT domains. The transformation of prephenalenone to phenalenones requires an FAD-dependent monooxygenase phnB, which catalyzes the C2 aromatic hydroxylation of prephenalenone and ring opening of the gamma-pyrone ring simultaneously. Subsequent intramolecular deprotonation of C3 phenolic oxygen accelerates phenalenone ring closure to yield the tricyclic phenalenone core with a C2 hydroxylation. The prenyltransferase phnF further catalyzes reverse C-prenylation of phenalenone by direct electrophilic substitution at C6, or possibly via first a forward O-prenylation of a neighboring phenol in phenalenone, followed by a Claisen rearrangement. The hydroalkoxylation enzyme phnH catalyzes the 5-exo-trig cyclization via acid catalysis after the spontaneous deprotonation of 7-OH, which leads to the formation of the dihydrobenzofuran atrovenetin. Atrovenetin is further converted to deoxyherqueinone by the O-methyltransferase phnC which can methylate C2-OH to stabilize the northern portion of the phenalenone core. Finally, the oxidoreductase phnG converts deoxyherqueinone to herqueinone via C6 hydroxylation. In Penicillium herquei, this protein is FAD-dependent monooxygenase phnB.